A 728-amino-acid chain; its full sequence is Elongation factor 2 (728 aa).

The region spanning 19 to 261 (EHIRNIAIAA…MVCEHFPNPV (243 aa)) is the tr-type G domain. Residues 28–35 (AHVDHGKT), 94–98 (DTPGH), and 148–151 (NKVD) contribute to the GTP site. Position 596 is a diphthamide (His-596).

The protein belongs to the TRAFAC class translation factor GTPase superfamily. Classic translation factor GTPase family. EF-G/EF-2 subfamily.

It localises to the cytoplasm. Functionally, catalyzes the GTP-dependent ribosomal translocation step during translation elongation. During this step, the ribosome changes from the pre-translocational (PRE) to the post-translocational (POST) state as the newly formed A-site-bound peptidyl-tRNA and P-site-bound deacylated tRNA move to the P and E sites, respectively. Catalyzes the coordinated movement of the two tRNA molecules, the mRNA and conformational changes in the ribosome. The polypeptide is Elongation factor 2 (Haloarcula marismortui (strain ATCC 43049 / DSM 3752 / JCM 8966 / VKM B-1809) (Halobacterium marismortui)).